A 277-amino-acid chain; its full sequence is MLTKRALRTTDPYRRVLSRGFSVLNRPSPNYPGHVPLTTLERGALAVGSAIGSLINPRRADLIAALGEATATPYFIYRLRDVMLSDPTGRRILRNQPSINSQTLSVEYLRSLSPNTVGRTYVDWLDREGVGPDTRAKVQYIDDKECAYVMQRYRECHDFYHAITGLPVVVEGEIALKTFEFANTLLPMTGLSMFAVMRLKPEEKERFWKLHLPWAVRNGLASKAVINVYWEEQLERDVDELRKELGIEKPVDLREIRKIMRRQKKMAEEAAKTKKRY.

The transit peptide at 1–14 (MLTKRALRTTDPYR) directs the protein to the mitochondrion. The Zn(2+) site is built by His-157, Asp-158, His-161, and Glu-173.

Belongs to the COQ4 family. In terms of assembly, component of a multi-subunit COQ enzyme complex, composed of at least COQ3, COQ4, COQ5, COQ6, COQ7 and COQ9. The cofactor is Zn(2+).

Its subcellular location is the mitochondrion inner membrane. The enzyme catalyses a 4-hydroxy-3-methoxy-5-(all-trans-polyprenyl)benzoate + H(+) = a 2-methoxy-6-(all-trans-polyprenyl)phenol + CO2. It participates in cofactor biosynthesis; ubiquinone biosynthesis. Lyase that catalyzes the C1-decarboxylation of 4-hydroxy-3-methoxy-5-(all-trans-polyprenyl)benzoic acid into 2-methoxy-6-(all-trans-polyprenyl)phenol during ubiquinone biosynthesis. The protein is Ubiquinone biosynthesis protein COQ4, mitochondrial of Ajellomyces capsulatus (strain G186AR / H82 / ATCC MYA-2454 / RMSCC 2432) (Darling's disease fungus).